The sequence spans 352 residues: Ion-translocating oxidoreductase complex subunit D (352 aa).

Transmembrane regions (helical) follow at residues 20–40 (IMLL…WFFG), 42–62 (GTLF…AIVL), 69–91 (VASH…SIPP), and 123–143 (PAMI…TSWL). Thr187 is modified (FMN phosphoryl threonine). The next 5 membrane-spanning stretches (helical) occupy residues 215-235 (LAGV…VFLL), 242-262 (WHIP…GWLF), 267-287 (LASP…FFIL), 301-321 (LIFG…GGYP), and 322-342 (DGVA…DYYT).

The protein belongs to the NqrB/RnfD family. As to quaternary structure, the complex is composed of six subunits: RsxA, RsxB, RsxC, RsxD, RsxE and RsxG. The cofactor is FMN.

Its subcellular location is the cell inner membrane. In terms of biological role, part of a membrane-bound complex that couples electron transfer with translocation of ions across the membrane. Required to maintain the reduced state of SoxR. The sequence is that of Ion-translocating oxidoreductase complex subunit D from Salmonella typhi.